A 783-amino-acid chain; its full sequence is Protein transport protein SEC23 B (783 aa).

Zn(2+) is bound by residues Cys-59, Cys-62, Cys-81, and Cys-84. The interval Cys-59–Cys-84 is zinc finger-like.

Belongs to the SEC23/SEC24 family. SEC23 subfamily. Component of the coat protein complex II (COPII), composed of at least five proteins: the Sec23/24 complex, the Sec13/31 complex and Sar1. Interacts with SEC24A.

The protein localises to the cytoplasmic vesicle. Its subcellular location is the COPII-coated vesicle membrane. The protein resides in the endoplasmic reticulum membrane. It localises to the membrane. Functionally, component of the coat protein complex II (COPII) which promotes the formation of transport vesicles from the endoplasmic reticulum (ER). The coat has two main functions, the physical deformation of the endoplasmic reticulum membrane into vesicles and the selection of cargo molecules. The chain is Protein transport protein SEC23 B from Arabidopsis thaliana (Mouse-ear cress).